The sequence spans 1270 residues: Breakpoint cluster region protein (1270 aa).

Positions 28–55 (VGDIEQELERCKASIRRLEQEVNQERFR) form a coiled coil. 4 disordered regions span residues 67 to 173 (KKSY…SADA), 201 to 249 (ISSL…DYED), 295 to 396 (KSPL…RHRQ), and 412 to 484 (TGQI…LEPT). Low complexity predominate over residues 126 to 139 (GRPATARRPAAAAP). Residues serine 216 and serine 237 each carry the phosphoserine modification. Residue tyrosine 247 is modified to Phosphotyrosine. 2 stretches are compositionally biased toward low complexity: residues 348-358 (SSGQSSRVSPS) and 371-384 (SPSQ…DSSS). Phosphoserine is present on residues serine 358, serine 379, and serine 384. Threonine 387 is modified (phosphothreonine). Phosphoserine is present on residues serine 461 and serine 465. Arginine 473 carries the post-translational modification Omega-N-methylarginine. Phosphoserine is present on residues serine 475 and serine 487. One can recognise a DH domain in the interval 497–690 (MRKWVLSGIL…QNFLSSINEE (194 aa)). Tyrosine 553 is modified (phosphotyrosine). At threonine 640 the chain carries Phosphothreonine. Tyrosine 643 carries the phosphotyrosine modification. Threonine 692 carries the post-translational modification Phosphothreonine. Residues 707-865 (QLLKDSFMVE…WRESIREQQK (159 aa)) enclose the PH domain. Residues 892–1019 (HHIPLTINKE…QDRDWQRTVI (128 aa)) form the C2 domain. The Rho-GAP domain occupies 1053-1247 (VKIAVVTKRE…VMSQVQVLLY (195 aa)). Position 1263 is a phosphoserine (serine 1263).

In terms of assembly, homotetramer. Interacts with PDZK1. May interact with CCPG1. Interacts with HCK, FES/FPS, ABL1, PIK3R1 and GRB2. Interacts with SH2D5. Interacts with DLG4. Post-translationally, autophosphorylated. Phosphorylated by FES/FPS on tyrosine residues, leading to down-regulation of the BCR kinase activity. Phosphorylation by HCK is important for interaction with GRB2. As to expression, expressed in brain, including the cortex, hippocampus, cerebellum, and brainstem, as well as the spinal cord (at protein level).

Its subcellular location is the postsynaptic density. It is found in the cell projection. The protein localises to the dendritic spine. It localises to the axon. The protein resides in the synapse. It catalyses the reaction L-seryl-[protein] + ATP = O-phospho-L-seryl-[protein] + ADP + H(+). The enzyme catalyses L-threonyl-[protein] + ATP = O-phospho-L-threonyl-[protein] + ADP + H(+). Functionally, protein with a unique structure having two opposing regulatory activities toward small GTP-binding proteins. The C-terminus is a GTPase-activating protein (GAP) domain which stimulates GTP hydrolysis by RAC1, RAC2 and CDC42. Accelerates the intrinsic rate of GTP hydrolysis of RAC1 or CDC42, leading to down-regulation of the active GTP-bound form. The central Dbl homology (DH) domain functions as guanine nucleotide exchange factor (GEF) that modulates the GTPases CDC42, RHOA and RAC1. Promotes the conversion of CDC42, RHOA and RAC1 from the GDP-bound to the GTP-bound form. The amino terminus contains an intrinsic kinase activity. Functions as an important negative regulator of neuronal RAC1 activity. Regulates macrophage functions such as CSF1-directed motility and phagocytosis through the modulation of RAC1 activity. Plays a major role as a RHOA GEF in keratinocytes being involved in focal adhesion formation and keratinocyte differentiation. The sequence is that of Breakpoint cluster region protein from Rattus norvegicus (Rat).